A 243-amino-acid polypeptide reads, in one-letter code: GrpE protein homolog, mitochondrial (243 aa).

The interval 56–79 is disordered; that stretch reads KKEEPKDENDAAAAEEDANLTEEQ.

This sequence belongs to the GrpE family. In terms of assembly, component of the PAM complex, at least composed of mtHsp70, MGE1, TIM44, PAM16, PAM17 and PAM18.

It is found in the mitochondrion matrix. Functionally, essential component of the PAM complex, a complex required for the translocation of transit peptide-containing proteins from the inner membrane into the mitochondrial matrix in an ATP-dependent manner. Seems to control the nucleotide-dependent binding of SSC1 to substrate proteins. The chain is GrpE protein homolog, mitochondrial (mge1) from Kluyveromyces lactis (strain ATCC 8585 / CBS 2359 / DSM 70799 / NBRC 1267 / NRRL Y-1140 / WM37) (Yeast).